The chain runs to 210 residues: Large ribosomal subunit protein uL3 (210 aa).

Residues 126–150 are disordered; it reads VSATHGSHRNHRKPGSVGASSTPSR.

This sequence belongs to the universal ribosomal protein uL3 family. As to quaternary structure, part of the 50S ribosomal subunit. Forms a cluster with proteins L14 and L19.

In terms of biological role, one of the primary rRNA binding proteins, it binds directly near the 3'-end of the 23S rRNA, where it nucleates assembly of the 50S subunit. The protein is Large ribosomal subunit protein uL3 of Tropheryma whipplei (strain TW08/27) (Whipple's bacillus).